A 187-amino-acid polypeptide reads, in one-letter code: MTAKSDEPGRWTVAVYCAAAPTHPELLELAGAVGAAIAARGWTLVWGGGHVSAMGAVSSAARAHGGWTVGVIPKMLVHRELADHDADELVVTETMWERKQVMEDRANAFITLPGGVGTLDELLDVWTEGYLGMHDKSIVVLDPWGHFDGLRAWLSELADTGYVSRTAMERLIVVDNLDDALQACAPG.

Substrate contacts are provided by residues Glu-80, 98–99 (RK), 115–121 (GVGTLDE), and Thr-127.

The protein belongs to the LOG family.

It catalyses the reaction N(6)-(dimethylallyl)adenosine 5'-phosphate + H2O = N(6)-dimethylallyladenine + D-ribose 5-phosphate. The catalysed reaction is 9-ribosyl-trans-zeatin 5'-phosphate + H2O = trans-zeatin + D-ribose 5-phosphate. In terms of biological role, catalyzes the hydrolytic removal of ribose 5'-monophosphate from nitrogen N6-modified adenosines, the final step of bioactive cytokinin synthesis. In Mycobacterium marinum (strain ATCC BAA-535 / M), this protein is Cytokinin riboside 5'-monophosphate phosphoribohydrolase.